Reading from the N-terminus, the 382-residue chain is Glycerate kinase (382 aa).

This sequence belongs to the glycerate kinase type-1 family.

It catalyses the reaction (R)-glycerate + ATP = (2R)-3-phosphoglycerate + ADP + H(+). The protein is Glycerate kinase (glxK) of Bacillus subtilis (strain 168).